The chain runs to 188 residues: dCTP deaminase (188 aa).

Residues 111-116 (KSTYAR), 135-137 (TLE), Gln156, Tyr170, and Gln180 each bind dCTP. The active-site Proton donor/acceptor is the Glu137.

Belongs to the dCTP deaminase family. As to quaternary structure, homotrimer.

It catalyses the reaction dCTP + H2O + H(+) = dUTP + NH4(+). The protein operates within pyrimidine metabolism; dUMP biosynthesis; dUMP from dCTP (dUTP route): step 1/2. Its function is as follows. Catalyzes the deamination of dCTP to dUTP. This is dCTP deaminase from Dichelobacter nodosus (strain VCS1703A).